Reading from the N-terminus, the 71-residue chain is Arrestin-D (71 aa).

This sequence belongs to the arrestin family. In terms of tissue distribution, adrenal, cerebral cortex, heart, liver, lung, pituitary and testis.

This Rattus norvegicus (Rat) protein is Arrestin-D (Dar).